A 158-amino-acid polypeptide reads, in one-letter code: Cyclic pyranopterin monophosphate synthase (158 aa).

Substrate-binding positions include 76 to 78 (LCH) and 114 to 115 (ME). Residue aspartate 129 is part of the active site.

This sequence belongs to the MoaC family. As to quaternary structure, homohexamer; trimer of dimers.

It catalyses the reaction (8S)-3',8-cyclo-7,8-dihydroguanosine 5'-triphosphate = cyclic pyranopterin phosphate + diphosphate. It participates in cofactor biosynthesis; molybdopterin biosynthesis. Functionally, catalyzes the conversion of (8S)-3',8-cyclo-7,8-dihydroguanosine 5'-triphosphate to cyclic pyranopterin monophosphate (cPMP). The sequence is that of Cyclic pyranopterin monophosphate synthase from Brucella anthropi (strain ATCC 49188 / DSM 6882 / CCUG 24695 / JCM 21032 / LMG 3331 / NBRC 15819 / NCTC 12168 / Alc 37) (Ochrobactrum anthropi).